Reading from the N-terminus, the 249-residue chain is Portal protein (249 aa).

Belongs to the phi29likevirus portal protein family. In terms of assembly, homododecamer. Interacts with the pRNA.

The protein localises to the virion. In terms of biological role, forms the portal vertex of the capsid. This portal plays critical roles in head assembly, genome packaging, neck/tail attachment, and genome ejection. The portal protein multimerizes as a single ring-shaped homododecamer arranged around a central channel. Binds to the 6 packaging RNA molecules (pRNA) forming a double-ring structure which in turn binds to the ATPase gp16 hexamer, forming the active DNA-translocating motor. This complex is essential for the specificity of packaging from the left DNA end. This chain is Portal protein, found in Staphylococcus phage 44AHJD.